The primary structure comprises 100 residues: Urease subunit gamma (100 aa).

This sequence belongs to the urease gamma subunit family. Heterotrimer of UreA (gamma), UreB (beta) and UreC (alpha) subunits. Three heterotrimers associate to form the active enzyme.

It localises to the cytoplasm. The catalysed reaction is urea + 2 H2O + H(+) = hydrogencarbonate + 2 NH4(+). Its pathway is nitrogen metabolism; urea degradation; CO(2) and NH(3) from urea (urease route): step 1/1. In Granulibacter bethesdensis (strain ATCC BAA-1260 / CGDNIH1), this protein is Urease subunit gamma.